The following is a 78-amino-acid chain: Major outer membrane lipoprotein Lpp (78 aa).

An N-terminal signal peptide occupies residues methionine 1–glycine 20. Cysteine 21 carries the N-palmitoyl cysteine lipid modification. Cysteine 21 is lipidated: S-diacylglycerol cysteine. Residues serine 22–serine 75 adopt a coiled-coil conformation. 2 consecutive repeats follow at residues asparagine 24–valine 34 and asparagine 38–valine 48. Lysine 78 is modified (N6-murein peptidoglycan lysine).

Belongs to the Lpp family. As to quaternary structure, homotrimer.

The protein localises to the cell outer membrane. It is found in the secreted. Its subcellular location is the cell wall. In terms of biological role, a highly abundant outer membrane lipoprotein that controls the distance between the inner and outer membranes. The only protein known to be covalently linked to the peptidoglycan network (PGN). Also non-covalently binds the PGN. The link between the cell outer membrane and PGN contributes to maintenance of the structural and functional integrity of the cell envelope, and maintains the correct distance between the PGN and the outer membrane. The sequence is that of Major outer membrane lipoprotein Lpp from Erwinia amylovora (Fire blight bacteria).